We begin with the raw amino-acid sequence, 312 residues long: Ubiquinone biosynthesis protein COQ9, mitochondrial (312 aa).

A mitochondrion-targeting transit peptide spans 1-45 (MAATAAVSGVLRRLGWRLLQLRCLPVARCQSPLMPRAFHTAVGFR). An SIFI-degron motif is present at residues 17-32 (RLLQLRCLPVARCQSP). Residues 43 to 92 (GFRSSEEQRQQPPHSSQQHSETQGPEFSRPPPRYTDQSGEEEEDYESEEQ) form a disordered region. Positions 52–63 (QQPPHSSQQHSE) are enriched in low complexity. Serine 80 is subject to Phosphoserine. Positions 80–91 (SGEEEEDYESEE) are enriched in acidic residues. Lysine 169 carries the post-translational modification N6-acetyllysine. Arginine 238 is an a 1,2-diacylglycero-3-phosphoethanolamine binding site.

This sequence belongs to the COQ9 family. Homodimer. Heterodimer; two heterodimers of COQ7:COQ9 come together on the same side of the lipid pseudo-bilayer and form a curved tetramer with a hydrophobic surface suitable for membrane interaction. These two tetramers assemble into a soluble octamer with a pseudo-bilayer of lipids captured within. Interacts with COQ7; this interaction allows ubiquinone (CoQ) isoprene intermediates presentation to COQ7 and facilitates the COQ7-mediated hydroxylase step. In terms of processing, in response to mitochondrial stress, the precursor protein is ubiquitinated by the SIFI complex in the cytoplasm before mitochondrial import, leading to its degradation. Within the SIFI complex, UBR4 initiates ubiquitin chain that are further elongated or branched by KCMF1.

The protein resides in the mitochondrion. It functions in the pathway cofactor biosynthesis; ubiquinone biosynthesis. Functionally, membrane-associated protein that warps the membrane surface to access and bind aromatic isoprenes with high specificity, including ubiquinone (CoQ) isoprene intermediates and presents them directly to COQ7, therefore facilitating the COQ7-mediated hydroxylase step. Participates in the biosynthesis of coenzyme Q, also named ubiquinone, an essential lipid-soluble electron transporter for aerobic cellular respiration. The polypeptide is Ubiquinone biosynthesis protein COQ9, mitochondrial (Rattus norvegicus (Rat)).